The primary structure comprises 342 residues: Ketol-acid reductoisomerase (NADP(+)) (342 aa).

In terms of domain architecture, KARI N-terminal Rossmann spans 2–181 (VKVYYNGDIK…GGARAGVLET (180 aa)). Residues 25 to 28 (YGSQ), R48, S52, and 82 to 85 (DEQQ) contribute to the NADP(+) site. H107 is an active-site residue. Residue G133 coordinates NADP(+). In terms of domain architecture, KARI C-terminal knotted spans 182–327 (TFKEETETDL…RQLREMMPFV (146 aa)). Residues D190, E194, E226, and E230 each coordinate Mg(2+). S251 contacts substrate.

This sequence belongs to the ketol-acid reductoisomerase family. Mg(2+) serves as cofactor.

The enzyme catalyses (2R)-2,3-dihydroxy-3-methylbutanoate + NADP(+) = (2S)-2-acetolactate + NADPH + H(+). The catalysed reaction is (2R,3R)-2,3-dihydroxy-3-methylpentanoate + NADP(+) = (S)-2-ethyl-2-hydroxy-3-oxobutanoate + NADPH + H(+). It functions in the pathway amino-acid biosynthesis; L-isoleucine biosynthesis; L-isoleucine from 2-oxobutanoate: step 2/4. Its pathway is amino-acid biosynthesis; L-valine biosynthesis; L-valine from pyruvate: step 2/4. Involved in the biosynthesis of branched-chain amino acids (BCAA). Catalyzes an alkyl-migration followed by a ketol-acid reduction of (S)-2-acetolactate (S2AL) to yield (R)-2,3-dihydroxy-isovalerate. In the isomerase reaction, S2AL is rearranged via a Mg-dependent methyl migration to produce 3-hydroxy-3-methyl-2-ketobutyrate (HMKB). In the reductase reaction, this 2-ketoacid undergoes a metal-dependent reduction by NADPH to yield (R)-2,3-dihydroxy-isovalerate. This chain is Ketol-acid reductoisomerase (NADP(+)), found in Bacillus velezensis (strain DSM 23117 / BGSC 10A6 / LMG 26770 / FZB42) (Bacillus amyloliquefaciens subsp. plantarum).